Reading from the N-terminus, the 174-residue chain is Small ribosomal subunit protein bS16 (174 aa).

Positions 81–174 are disordered; sequence QRFTGEPAPP…DATTDATPSA (94 aa). Positions 87-97 are enriched in pro residues; it reads PAPPPMKTAPP. Positions 98–118 are enriched in basic and acidic residues; the sequence is KPDKKALFEAAAKEAAGEPRA. Positions 135–158 are enriched in low complexity; sequence ETTPAAEAAPDAAASADEPAGGAS. Residues 160 to 174 are compositionally biased toward polar residues; it reads AAESQDATTDATPSA.

Belongs to the bacterial ribosomal protein bS16 family.

In Acidothermus cellulolyticus (strain ATCC 43068 / DSM 8971 / 11B), this protein is Small ribosomal subunit protein bS16.